A 99-amino-acid chain; its full sequence is Transmembrane protein 14A (99 aa).

Transmembrane regions (helical) follow at residues 1 to 21 (MDLIGFGYAALVTFGSIFGYK), 24 to 44 (GGVPSLIAGLFVGCLAGYGAY), and 79 to 99 (PAGLVAGLSLMMILRLVLLLL).

The protein belongs to the TMEM14 family. Expressed at significantly higher levels in ovarian cancer tissues than in normal tissues (at protein level).

Its subcellular location is the mitochondrion membrane. The protein localises to the endoplasmic reticulum membrane. In terms of biological role, inhibits apoptosis via negative regulation of the mitochondrial outer membrane permeabilization involved in apoptotic signaling pathway. This Homo sapiens (Human) protein is Transmembrane protein 14A (TMEM14A).